The chain runs to 99 residues: Small ribosomal subunit protein uS19 (99 aa).

It belongs to the universal ribosomal protein uS19 family.

Its function is as follows. Protein S19 forms a complex with S13 that binds strongly to the 16S ribosomal RNA. The protein is Small ribosomal subunit protein uS19 of Sulfurihydrogenibium sp. (strain YO3AOP1).